Consider the following 164-residue polypeptide: Osteocalcin 2b (164 aa).

An N-terminal signal peptide occupies residues 1–18; sequence MKSLTLLTICAVLSVSLS. The propeptide occupies 19-115; the sequence is MNDLALDVVL…LASVLLRRKR (97 aa). A compositionally biased stretch (low complexity) spans 30–95; that stretch reads PDPAAEPAPA…EAMAEDPAAA (66 aa). The disordered stretch occupies residues 30–99; sequence PDPAAEPAPA…EDPAAATEPE (70 aa). A Gla domain is found at 128–160; sequence QVESLSEVCELNLACEHMAETAGIVAAYTAYYG. Residues glutamate 130, glutamate 134, and glutamate 137 each contribute to the Ca(2+) site. A 4-carboxyglutamate mark is found at glutamate 130, glutamate 134, and glutamate 137. Residues cysteine 136 and cysteine 142 are joined by a disulfide bond.

The protein belongs to the osteocalcin/matrix Gla protein family. Post-translationally, gamma-carboxyglutamate residues are formed by vitamin K dependent carboxylation. These residues are essential for the binding of calcium.

It localises to the secreted. Functionally, binds strongly to apatite and calcium. This is Osteocalcin 2b from Oncorhynchus mykiss (Rainbow trout).